We begin with the raw amino-acid sequence, 140 residues long: Cytochrome c-type biogenesis protein CcmE (140 aa).

Residues Met-1–Arg-7 lie on the Cytoplasmic side of the membrane. A helical; Signal-anchor for type II membrane protein transmembrane segment spans residues Leu-8 to Glu-28. Residues Leu-29 to Lys-140 lie on the Periplasmic side of the membrane. Heme contacts are provided by His-121 and Tyr-125.

The protein belongs to the CcmE/CycJ family.

The protein resides in the cell inner membrane. Functionally, heme chaperone required for the biogenesis of c-type cytochromes. Transiently binds heme delivered by CcmC and transfers the heme to apo-cytochromes in a process facilitated by CcmF and CcmH. In Anaplasma marginale (strain St. Maries), this protein is Cytochrome c-type biogenesis protein CcmE.